Consider the following 635-residue polypeptide: tRNA uridine 5-carboxymethylaminomethyl modification enzyme MnmG (635 aa).

Position 15-20 (15-20 (GAGHAG)) interacts with FAD. 276–290 (GPRYCPSIEDKIVRF) serves as a coordination point for NAD(+).

It belongs to the MnmG family. As to quaternary structure, homodimer. Heterotetramer of two MnmE and two MnmG subunits. FAD is required as a cofactor.

The protein resides in the cytoplasm. In terms of biological role, NAD-binding protein involved in the addition of a carboxymethylaminomethyl (cmnm) group at the wobble position (U34) of certain tRNAs, forming tRNA-cmnm(5)s(2)U34. This Streptococcus sanguinis (strain SK36) protein is tRNA uridine 5-carboxymethylaminomethyl modification enzyme MnmG.